A 640-amino-acid polypeptide reads, in one-letter code: Probable potassium transport system protein Kup 2 (640 aa).

Helical transmembrane passes span 19–39 (LFSS…YGDI), 67–87 (VLSL…VVFV), 118–138 (GVVA…GVIT), 155–175 (EAAK…LFLV), 181–201 (GVIG…IAAL), 230–250 (FVGV…EALY), 265–285 (WLGL…ALLL), 307–327 (MVCL…SGVF), 355–375 (VYIP…VLVF), 384–404 (AYGI…FFVI), 415–435 (AVPL…ANLF), and 437–457 (IFDG…SMIT).

It belongs to the HAK/KUP transporter (TC 2.A.72) family.

The protein localises to the cell inner membrane. The catalysed reaction is K(+)(in) + H(+)(in) = K(+)(out) + H(+)(out). In terms of biological role, transport of potassium into the cell. Likely operates as a K(+):H(+) symporter. The protein is Probable potassium transport system protein Kup 2 of Syntrophobacter fumaroxidans (strain DSM 10017 / MPOB).